The sequence spans 1118 residues: Cytospin-A (1118 aa).

Disordered stretches follow at residues methionine 1–serine 50, lysine 75–isoleucine 175, serine 294–glutamate 324, and serine 359–glutamate 391. Low complexity-rich tracts occupy residues alanine 34–alanine 48, serine 80–alanine 90, and lysine 99–serine 113. Over residues serine 120–arginine 131 the composition is skewed to basic and acidic residues. Residues asparagine 133 to alanine 145 are compositionally biased toward polar residues. Positions threonine 158–serine 171 are enriched in basic and acidic residues. Positions lysine 168–glutamine 281 form a coiled coil. The segment covering serine 294–glutamine 304 has biased composition (polar residues). Residues serine 359–glutamate 373 are compositionally biased toward low complexity. 3 positions are modified to phosphoserine: serine 385, serine 386, and serine 390. Coiled-coil stretches lie at residues alanine 395–leucine 450 and arginine 488–valine 808. Serine 869, serine 882, and serine 888 each carry phosphoserine. Residues glutamate 916–arginine 999 form a disordered region. Basic and acidic residues predominate over residues arginine 947–serine 957. Low complexity predominate over residues threonine 972–arginine 992. The Calponin-homology (CH) domain maps to glycine 1012 to glutamate 1117.

The protein belongs to the cytospin-A family. In terms of assembly, may interact with both microtubules and actin cytoskeleton.

It localises to the cytoplasm. The protein resides in the cytoskeleton. The protein localises to the spindle. Its subcellular location is the cell junction. It is found in the gap junction. In terms of biological role, involved in cytokinesis and spindle organization. May play a role in actin cytoskeleton organization and microtubule stabilization and hence required for proper cell adhesion and migration. This Rattus norvegicus (Rat) protein is Cytospin-A (Specc1l).